The primary structure comprises 775 residues: Glutamine--tRNA ligase (775 aa).

Residue Ala2 is modified to N-acetylalanine. Phosphoserine is present on Ser70. Residues 271–273 (EPN) and 277–283 (HIGHAKA) each bind ATP. An L-glutamine-binding site is contributed by Asp303. Residue Lys309 is modified to N6-acetyllysine. Position 438 (Tyr438) interacts with L-glutamine. Residues Thr457, 486–487 (RL), and 494–496 (VSK) contribute to the ATP site. Position 495 is a phosphoserine (Ser495).

It belongs to the class-I aminoacyl-tRNA synthetase family. Monomer. Part of a multisubunit complex that groups tRNA ligases for Arg (RARS1), Asp (DARS1), Gln (QARS1), Ile (IARS1), Leu (LARS1), Lys (KARS1), Met (MARS1) the bifunctional ligase for Glu and Pro (EPRS1) and the auxiliary subunits AIMP1/p43, AIMP2/p38 and EEF1E1/p18. Interacts with RARS1. Part of a complex composed of RARS1, QARS1 and AIMP1.

Its subcellular location is the cytoplasm. The protein resides in the cytosol. The catalysed reaction is tRNA(Gln) + L-glutamine + ATP = L-glutaminyl-tRNA(Gln) + AMP + diphosphate. Glutamine--tRNA ligase. Plays a critical role in brain development. The protein is Glutamine--tRNA ligase (Qars1) of Mus musculus (Mouse).